The primary structure comprises 1149 residues: DNA polymerase (1149 aa).

Residues 1–28 show a composition bias toward polar residues; the sequence is MSLVQSHGTSGLFTEPPNSINQQESSGP. The disordered stretch occupies residues 1-49; the sequence is MSLVQSHGTSGLFTEPPNSINQQESSGPSLPAQDATQASASSARAGATP. Low complexity predominate over residues 31–49; that stretch reads PAQDATQASASSARAGATP.

Belongs to the DNA polymerase type-B family. Heterodimer with the terminal protein; this heterodimer binds to bp 9 to 18 of the genome. Forms a complex with viral pTP, DBP and hosts NFIA and POU2F1/OCT1 for initiation of replication.

The protein localises to the host nucleus. It catalyses the reaction DNA(n) + a 2'-deoxyribonucleoside 5'-triphosphate = DNA(n+1) + diphosphate. Eukaryotic-type DNA polymerase involved in viral genomic replication. DNA synthesis is protein primed, and acts in a strand displacement replication. Assembles in complex with viral pTP, DBP, host NFIA and host POU2F1/OCT1 on viral origin of replication. The polymerase covalently transfers dCMP onto pTP, thereby initiating complementary strand synthesis. The sequence is that of DNA polymerase from Canine adenovirus serotype 1 (strain CLL) (CAdV-1).